A 400-amino-acid chain; its full sequence is Argininosuccinate synthase (400 aa).

Residue 10–18 (AYSGGVDTS) participates in ATP binding. Y89 lines the L-citrulline pocket. ATP is bound at residue G119. L-aspartate contacts are provided by T121, N125, and D126. Residue N125 coordinates L-citrulline. L-citrulline is bound by residues R129, S177, S186, E262, and Y274.

It belongs to the argininosuccinate synthase family. Type 1 subfamily. Homotetramer.

The protein resides in the cytoplasm. It catalyses the reaction L-citrulline + L-aspartate + ATP = 2-(N(omega)-L-arginino)succinate + AMP + diphosphate + H(+). Its pathway is amino-acid biosynthesis; L-arginine biosynthesis; L-arginine from L-ornithine and carbamoyl phosphate: step 2/3. In Synechococcus sp. (strain JA-2-3B'a(2-13)) (Cyanobacteria bacterium Yellowstone B-Prime), this protein is Argininosuccinate synthase.